Reading from the N-terminus, the 184-residue chain is Large ribosomal subunit protein uL22 (184 aa).

The protein belongs to the universal ribosomal protein uL22 family.

The polypeptide is Large ribosomal subunit protein uL22 (RPL17) (Yarrowia lipolytica (strain CLIB 122 / E 150) (Yeast)).